The primary structure comprises 394 residues: ATP-dependent RNA helicase fal1 (394 aa).

The Q motif motif lies at serine 21–serine 49. The region spanning isoleucine 52–isoleucine 222 is the Helicase ATP-binding domain. Alanine 65–threonine 72 provides a ligand contact to ATP. Serine 67 is subject to Phosphoserine. Positions aspartate 170–aspartate 173 match the DEAD box motif. The region spanning glycine 233–valine 394 is the Helicase C-terminal domain.

It belongs to the DEAD box helicase family. DDX48/FAL1 subfamily.

The protein resides in the nucleus. It is found in the nucleolus. The enzyme catalyses ATP + H2O = ADP + phosphate + H(+). In terms of biological role, ATP-dependent RNA helicase involved in 40S ribosomal subunit biogenesis. Required for the processing and cleavage of 35S pre-rRNA at sites A0, A1, and A2, leading to mature 18S rRNA. This is ATP-dependent RNA helicase fal1 (tif412) from Schizosaccharomyces pombe (strain 972 / ATCC 24843) (Fission yeast).